Here is a 258-residue protein sequence, read N- to C-terminus: UPF0246 protein VS_0505 (258 aa).

It belongs to the UPF0246 family.

This is UPF0246 protein VS_0505 from Vibrio atlanticus (strain LGP32) (Vibrio splendidus (strain Mel32)).